The sequence spans 572 residues: Solute carrier family 22 member 16 (572 aa).

The chain crosses the membrane as a helical span at residues 21-41 (IFLYFICAFQNISCGIHYLAS). An N-linked (GlcNAc...) asparagine glycan is attached at N57. 5 consecutive transmembrane segments (helical) span residues 156 to 176 (LIQP…GYLS), 183 to 203 (LVLW…AFTF), 208 to 228 (FIVA…VVFV), 244 to 264 (IHLH…GYFV), and 268 to 288 (WIYQ…CWML). An N-linked (GlcNAc...) asparagine glycan is attached at N315. 6 helical membrane-spanning segments follow: residues 359 to 379 (TLIL…FSLN), 389 to 409 (LNLF…CLGM), 416 to 436 (NILI…MVIP), 441 to 461 (VWLV…FGLI), 476 to 496 (LAVG…PLCI), and 503 to 523 (IFMP…LTFL). N-linked (GlcNAc...) asparagine glycosylation is present at N559.

The protein belongs to the major facilitator (TC 2.A.1) superfamily. Organic cation transporter (TC 2.A.1.19) family.

The protein localises to the cell membrane. The catalysed reaction is (R)-carnitine(in) = (R)-carnitine(out). It catalyses the reaction spermidine(in) = spermidine(out). Its function is as follows. Facilitative organic cation transporter that mediates the transport of carnitine as well as the polyamine spermidine. Mediates the partially Na(+)-dependent bidirectional transport of carnitine. May mediate L-carnitine secretion from testis epididymal epithelium into the lumen which is involved in the maturation of spermatozoa. This chain is Solute carrier family 22 member 16 (SLC22A16), found in Bos taurus (Bovine).